Here is a 210-residue protein sequence, read N- to C-terminus: MDLHNIREDYSKRELSEADCADNPIEQFERWLDEAVRAEVNEPTAVNVAAVDGRGRPNSRMVLLKEVNSEGFVFFTNYHSRKGRSLELNPFAAMTFFWPELERQVRVEGRVGRLAEKLSDEYFESRPYQSRLGAWASAQSEVIPNKAVLVAKAAAVGLKHPLHVPRPPHWGGYIVIPDLIEFWQGRPSRLHDRIQYRLLDGGWIRERLSP.

Residues 7–10 (REDY) and lysine 65 each bind substrate. FMN contacts are provided by residues 60–65 (RMVLLK), 75–76 (FT), arginine 81, lysine 82, and glutamine 104. Positions 122, 126, and 130 each coordinate substrate. Residues 139 to 140 (QS) and tryptophan 183 contribute to the FMN site. Residue 189–191 (RLH) coordinates substrate. An FMN-binding site is contributed by arginine 193.

It belongs to the pyridoxamine 5'-phosphate oxidase family. Homodimer. FMN is required as a cofactor.

The enzyme catalyses pyridoxamine 5'-phosphate + O2 + H2O = pyridoxal 5'-phosphate + H2O2 + NH4(+). The catalysed reaction is pyridoxine 5'-phosphate + O2 = pyridoxal 5'-phosphate + H2O2. Its pathway is cofactor metabolism; pyridoxal 5'-phosphate salvage; pyridoxal 5'-phosphate from pyridoxamine 5'-phosphate: step 1/1. It participates in cofactor metabolism; pyridoxal 5'-phosphate salvage; pyridoxal 5'-phosphate from pyridoxine 5'-phosphate: step 1/1. In terms of biological role, catalyzes the oxidation of either pyridoxine 5'-phosphate (PNP) or pyridoxamine 5'-phosphate (PMP) into pyridoxal 5'-phosphate (PLP). The chain is Pyridoxine/pyridoxamine 5'-phosphate oxidase from Neisseria gonorrhoeae (strain ATCC 700825 / FA 1090).